Consider the following 290-residue polypeptide: 4-hydroxybenzoate octaprenyltransferase (290 aa).

A run of 8 helical transmembrane segments spans residues 40–60 (IAGA…GVVI), 99–119 (LALF…LNEL), 120–140 (TFWL…TKRF), 142–162 (FMPQ…AFAA), 165–185 (GEVP…TVAY), 215–235 (LMIA…GHRL), 239–259 (WPWY…HSLI), and 267–287 (SFHA…GLYF).

This sequence belongs to the UbiA prenyltransferase family. Requires Mg(2+) as cofactor.

The protein resides in the cell inner membrane. The enzyme catalyses all-trans-octaprenyl diphosphate + 4-hydroxybenzoate = 4-hydroxy-3-(all-trans-octaprenyl)benzoate + diphosphate. It functions in the pathway cofactor biosynthesis; ubiquinone biosynthesis. Catalyzes the prenylation of para-hydroxybenzoate (PHB) with an all-trans polyprenyl group. Mediates the second step in the final reaction sequence of ubiquinone-8 (UQ-8) biosynthesis, which is the condensation of the polyisoprenoid side chain with PHB, generating the first membrane-bound Q intermediate 3-octaprenyl-4-hydroxybenzoate. The sequence is that of 4-hydroxybenzoate octaprenyltransferase from Alcanivorax borkumensis (strain ATCC 700651 / DSM 11573 / NCIMB 13689 / SK2).